The following is a 350-amino-acid chain: Methionine import ATP-binding protein MetN (350 aa).

The 241-residue stretch at 2–242 (IELKGISQHF…PRHDVTRALI (241 aa)) folds into the ABC transporter domain. An ATP-binding site is contributed by 39 to 46 (GRSGAGKS).

This sequence belongs to the ABC transporter superfamily. Methionine importer (TC 3.A.1.24) family. The complex is composed of two ATP-binding proteins (MetN), two transmembrane proteins (MetI) and a solute-binding protein (MetQ).

Its subcellular location is the cell inner membrane. It catalyses the reaction L-methionine(out) + ATP + H2O = L-methionine(in) + ADP + phosphate + H(+). The enzyme catalyses D-methionine(out) + ATP + H2O = D-methionine(in) + ADP + phosphate + H(+). In terms of biological role, part of the ABC transporter complex MetNIQ involved in methionine import. Responsible for energy coupling to the transport system. The sequence is that of Methionine import ATP-binding protein MetN from Ralstonia nicotianae (strain ATCC BAA-1114 / GMI1000) (Ralstonia solanacearum).